The chain runs to 203 residues: Ribosome maturation factor RimP (203 aa).

Residues Val-179 to Lys-203 form a disordered region.

This sequence belongs to the RimP family.

The protein localises to the cytoplasm. Functionally, required for maturation of 30S ribosomal subunits. The sequence is that of Ribosome maturation factor RimP from Gluconobacter oxydans (strain 621H) (Gluconobacter suboxydans).